The sequence spans 477 residues: Ribulose bisphosphate carboxylase large chain (477 aa).

Positions 1 to 2 (MS) are excised as a propeptide. Position 3 is an N-acetylproline (proline 3). Lysine 14 is modified (N6,N6,N6-trimethyllysine). Substrate contacts are provided by asparagine 123 and threonine 173. The Proton acceptor role is filled by lysine 175. Lysine 177 contacts substrate. Lysine 201, aspartate 203, and glutamate 204 together coordinate Mg(2+). Lysine 201 carries the N6-carboxylysine modification. The active-site Proton acceptor is the histidine 294. Positions 295, 327, and 379 each coordinate substrate.

This sequence belongs to the RuBisCO large chain family. Type I subfamily. In terms of assembly, heterohexadecamer of 8 large chains and 8 small chains; disulfide-linked. The disulfide link is formed within the large subunit homodimers. Mg(2+) serves as cofactor. Post-translationally, the disulfide bond which can form in the large chain dimeric partners within the hexadecamer appears to be associated with oxidative stress and protein turnover.

It is found in the plastid. It localises to the chloroplast. It carries out the reaction 2 (2R)-3-phosphoglycerate + 2 H(+) = D-ribulose 1,5-bisphosphate + CO2 + H2O. The enzyme catalyses D-ribulose 1,5-bisphosphate + O2 = 2-phosphoglycolate + (2R)-3-phosphoglycerate + 2 H(+). Functionally, ruBisCO catalyzes two reactions: the carboxylation of D-ribulose 1,5-bisphosphate, the primary event in carbon dioxide fixation, as well as the oxidative fragmentation of the pentose substrate in the photorespiration process. Both reactions occur simultaneously and in competition at the same active site. The sequence is that of Ribulose bisphosphate carboxylase large chain from Carthamus tinctorius (Safflower).